The following is a 203-amino-acid chain: Chromophore lyase CpcT/CpeT 3 (203 aa).

Belongs to the CpcT/CpeT biliprotein lyase family.

In terms of biological role, covalently attaches a chromophore to Cys residue(s) of phycobiliproteins. In Gloeobacter violaceus (strain ATCC 29082 / PCC 7421), this protein is Chromophore lyase CpcT/CpeT 3.